A 318-amino-acid polypeptide reads, in one-letter code: CRISPR-associated endonuclease Cas1 1 (318 aa).

Mn(2+) is bound by residues glutamate 160, histidine 225, and glutamate 240.

It belongs to the CRISPR-associated endonuclease Cas1 family. Homodimer, forms a heterotetramer with a Cas2 homodimer. Mg(2+) is required as a cofactor. The cofactor is Mn(2+).

CRISPR (clustered regularly interspaced short palindromic repeat), is an adaptive immune system that provides protection against mobile genetic elements (viruses, transposable elements and conjugative plasmids). CRISPR clusters contain spacers, sequences complementary to antecedent mobile elements, and target invading nucleic acids. CRISPR clusters are transcribed and processed into CRISPR RNA (crRNA). Acts as a dsDNA endonuclease. Involved in the integration of spacer DNA into the CRISPR cassette. The protein is CRISPR-associated endonuclease Cas1 1 of Thermodesulfovibrio yellowstonii (strain ATCC 51303 / DSM 11347 / YP87).